The sequence spans 1037 residues: Glycine dehydrogenase (decarboxylating) A, mitochondrial (1037 aa).

Residues Met1–Thr66 constitute a mitochondrion transit peptide. Position 773 is an N6-(pyridoxal phosphate)lysine (Lys773).

Belongs to the GcvP family. As to quaternary structure, homodimer. The glycine cleavage system is composed of four proteins: P, T, L and H. It depends on pyridoxal 5'-phosphate as a cofactor. Expressed in leaves, stems and roots.

The protein resides in the mitochondrion. It catalyses the reaction N(6)-[(R)-lipoyl]-L-lysyl-[glycine-cleavage complex H protein] + glycine + H(+) = N(6)-[(R)-S(8)-aminomethyldihydrolipoyl]-L-lysyl-[glycine-cleavage complex H protein] + CO2. The glycine cleavage system catalyzes the degradation of glycine. The P protein binds the alpha-amino group of glycine through its pyridoxal phosphate cofactor; CO(2) is released and the remaining methylamine moiety is then transferred to the lipoamide cofactor of the H protein. The sequence is that of Glycine dehydrogenase (decarboxylating) A, mitochondrial (GDCSPA) from Flaveria pringlei.